Consider the following 230-residue polypeptide: MLERAPVVTVDGPSGAGKGTISQLLAEKLGYKLLDSGAIYRVLALAAIHHNVELDNEESLTLLAAHLDVQFITGNESKGIKVVLEGEDVSTTIRSQECSNAASKVAAFPRVREALLRRQRAFAEAPGLIADGRDMGTVVFPATPAKLFLTASAEERAQRRYNQLQDNGFDVKIDQLLSEIKERDDRDMNRSVAPLVPAEDALVIDTTNISIEDVLAMALTHIHKSFQVPA.

12-20 (GPSGAGKGT) is an ATP binding site.

This sequence belongs to the cytidylate kinase family. Type 1 subfamily.

It is found in the cytoplasm. The catalysed reaction is CMP + ATP = CDP + ADP. It carries out the reaction dCMP + ATP = dCDP + ADP. In Shewanella piezotolerans (strain WP3 / JCM 13877), this protein is Cytidylate kinase.